Here is a 144-residue protein sequence, read N- to C-terminus: Large ribosomal subunit protein uL15 (144 aa).

The interval 1 to 49 is disordered; sequence MRLNTLSPAAGAKSAAKRVGRGIGSGTGKTCGRGHKGQKSRSGGGVRVG. The span at 21–31 shows a compositional bias: gly residues; sequence RGIGSGTGKTC.

This sequence belongs to the universal ribosomal protein uL15 family. Part of the 50S ribosomal subunit.

Binds to the 23S rRNA. This Shewanella sediminis (strain HAW-EB3) protein is Large ribosomal subunit protein uL15.